The sequence spans 659 residues: Fructose-1,6-bisphosphatase class 3 (659 aa).

This sequence belongs to the FBPase class 3 family. Mn(2+) is required as a cofactor.

It carries out the reaction beta-D-fructose 1,6-bisphosphate + H2O = beta-D-fructose 6-phosphate + phosphate. Its pathway is carbohydrate biosynthesis; gluconeogenesis. This Clostridium botulinum (strain Alaska E43 / Type E3) protein is Fructose-1,6-bisphosphatase class 3.